Here is a 152-residue protein sequence, read N- to C-terminus: Arginine repressor (152 aa).

It belongs to the ArgR family.

Its subcellular location is the cytoplasm. It participates in amino-acid biosynthesis; L-arginine biosynthesis [regulation]. Functionally, regulates arginine biosynthesis genes. The protein is Arginine repressor of Lachnoclostridium phytofermentans (strain ATCC 700394 / DSM 18823 / ISDg) (Clostridium phytofermentans).